We begin with the raw amino-acid sequence, 306 residues long: MALRHFLTLRDLSTLELNRILERASELKKMQQSNKVYQPFVGKVLGMIFEKSSTRTRISFEAGINQFGGSAIFLSPRDTQLGRGEPIEDSARVISSMLDIVMIRTFGHDIVERFASYSKVPVINGLTDDHHPCQLLADLQTYIEHRGSIEGKTVAWIGDGNNMCNSYIEAAHMMGFKLKIASPKGYEPKPEFLAEFGHCVELFDNAEDAAVNADLIVTDVWASMGQEEEQKLREKAFADFQVNEKLMGLAHPDCLFMHCLPAHRGEEISETMLDHKNAVVWDEAENRLHAQKALMEFLLNENLKKA.

Carbamoyl phosphate contacts are provided by residues 53-56, Q80, R104, and 131-134; these read STRT and HPCQ. Residues N162, D219, and 223–224 contribute to the L-ornithine site; that span reads SM. Carbamoyl phosphate contacts are provided by residues 259-260 and R287; that span reads CL.

The protein belongs to the aspartate/ornithine carbamoyltransferase superfamily. OTCase family.

The protein localises to the cytoplasm. The catalysed reaction is carbamoyl phosphate + L-ornithine = L-citrulline + phosphate + H(+). The protein operates within amino-acid biosynthesis; L-arginine biosynthesis; L-arginine from L-ornithine and carbamoyl phosphate: step 1/3. Its function is as follows. Reversibly catalyzes the transfer of the carbamoyl group from carbamoyl phosphate (CP) to the N(epsilon) atom of ornithine (ORN) to produce L-citrulline. The polypeptide is Ornithine carbamoyltransferase (Acinetobacter baumannii (strain ATCC 17978 / DSM 105126 / CIP 53.77 / LMG 1025 / NCDC KC755 / 5377)).